A 191-amino-acid polypeptide reads, in one-letter code: Leucyl/phenylalanyl-tRNA--protein transferase (191 aa).

This sequence belongs to the L/F-transferase family.

Its subcellular location is the cytoplasm. The catalysed reaction is N-terminal L-lysyl-[protein] + L-leucyl-tRNA(Leu) = N-terminal L-leucyl-L-lysyl-[protein] + tRNA(Leu) + H(+). It carries out the reaction N-terminal L-arginyl-[protein] + L-leucyl-tRNA(Leu) = N-terminal L-leucyl-L-arginyl-[protein] + tRNA(Leu) + H(+). It catalyses the reaction L-phenylalanyl-tRNA(Phe) + an N-terminal L-alpha-aminoacyl-[protein] = an N-terminal L-phenylalanyl-L-alpha-aminoacyl-[protein] + tRNA(Phe). Functions in the N-end rule pathway of protein degradation where it conjugates Leu, Phe and, less efficiently, Met from aminoacyl-tRNAs to the N-termini of proteins containing an N-terminal arginine or lysine. This chain is Leucyl/phenylalanyl-tRNA--protein transferase, found in Rubrobacter xylanophilus (strain DSM 9941 / JCM 11954 / NBRC 16129 / PRD-1).